The chain runs to 210 residues: V-type ATP synthase subunit D (210 aa).

This sequence belongs to the V-ATPase D subunit family.

Functionally, produces ATP from ADP in the presence of a proton gradient across the membrane. In Coprothermobacter proteolyticus (strain ATCC 35245 / DSM 5265 / OCM 4 / BT), this protein is V-type ATP synthase subunit D.